We begin with the raw amino-acid sequence, 913 residues long: Glutamate receptor ionotropic, kainate 2 (913 aa).

Topologically, residues 1 to 566 are extracellular; it reads MCAGTMKIIS…VFSFLNPLSP (566 aa). N-linked (GlcNAc...) asparagine glycans are attached at residues Asn-72, Asn-78, Asn-280, Asn-383, Asn-417, Asn-428, and Asn-435. An intrachain disulfide couples Cys-101 to Cys-352. Residues Pro-521, Ala-523, and Arg-528 each contribute to the L-glutamate site. The N-linked (GlcNAc...) asparagine glycan is linked to Asn-551. A helical membrane pass occupies residues 567–587; the sequence is DIWMYILLAYLGVSCVLFVIA. Over 588 to 643 the chain is Cytoplasmic; it reads RFSPYEWYNPHPCNPDSDVVENNFTLLNSFWFGVGALMQQGSELMPKALSTRIVGG. Residues 644-664 traverse the membrane as a helical segment; the sequence is IWWFFTLIIISSYTANLAAFL. Residues 665–824 are Extracellular-facing; that stretch reads TVERMESPID…KEASALGVQN (160 aa). The L-glutamate site is built by Ala-694, Thr-695, and Glu-743. Cys-755 and Cys-809 form a disulfide bridge. Asn-756 is a glycosylation site (N-linked (GlcNAc...) asparagine). Residues 825 to 845 form a helical membrane-spanning segment; that stretch reads IGGIFIVLAAGLVLSVFVAVG. Residues 846 to 913 are Cytoplasmic-facing; that stretch reads EFLYKSKKNA…RRLPGKETMA (68 aa).

Belongs to the glutamate-gated ion channel (TC 1.A.10.1) family. GRIK2 subfamily. As to quaternary structure, homotetramer and heterotetramer with GRIK5. Tetramers may be formed by the dimerization of dimers.

Its subcellular location is the cell membrane. The protein resides in the postsynaptic cell membrane. It carries out the reaction Ca(2+)(in) = Ca(2+)(out). The enzyme catalyses Na(+)(in) = Na(+)(out). Its activity is regulated as follows. Cold receptor activity activated by temperatures between 10-19 degrees Celsius. Functionally, ionotropic glutamate receptor that functions as a cation-permeable ligand-gated ion channel, gated by L-glutamate and the glutamatergic agonist kainic acid. L-glutamate acts as an excitatory neurotransmitter at many synapses in the central nervous system. Binding of the excitatory neurotransmitter L-glutamate induces a conformation change, leading to the opening of the cation channel, and thereby converts the chemical signal to an electrical impulse. The receptor then desensitizes rapidly and enters a transient inactive state, characterized by the presence of bound agonist. In terms of biological role, independent of its ionotropic glutamate receptor activity, acts as a thermoreceptor conferring sensitivity to cold temperatures. Functions in dorsal root ganglion neurons. The sequence is that of Glutamate receptor ionotropic, kainate 2 (grik2) from Xenopus laevis (African clawed frog).